A 209-amino-acid chain; its full sequence is Large ribosomal subunit protein uL3 (209 aa).

Residue glutamine 150 is modified to N5-methylglutamine.

This sequence belongs to the universal ribosomal protein uL3 family. Part of the 50S ribosomal subunit. Forms a cluster with proteins L14 and L19. Methylated by PrmB.

In terms of biological role, one of the primary rRNA binding proteins, it binds directly near the 3'-end of the 23S rRNA, where it nucleates assembly of the 50S subunit. The polypeptide is Large ribosomal subunit protein uL3 (Buchnera aphidicola subsp. Schizaphis graminum (strain Sg)).